Consider the following 225-residue polypeptide: Phosphatidylserine decarboxylase proenzyme (225 aa).

The Schiff-base intermediate with substrate; via pyruvic acid role is filled by S188. S188 is subject to Pyruvic acid (Ser); by autocatalysis.

This sequence belongs to the phosphatidylserine decarboxylase family. PSD-A subfamily. Heterodimer of a large membrane-associated beta subunit and a small pyruvoyl-containing alpha subunit. The cofactor is pyruvate. In terms of processing, is synthesized initially as an inactive proenzyme. Formation of the active enzyme involves a self-maturation process in which the active site pyruvoyl group is generated from an internal serine residue via an autocatalytic post-translational modification. Two non-identical subunits are generated from the proenzyme in this reaction, and the pyruvate is formed at the N-terminus of the alpha chain, which is derived from the carboxyl end of the proenzyme. The post-translation cleavage follows an unusual pathway, termed non-hydrolytic serinolysis, in which the side chain hydroxyl group of the serine supplies its oxygen atom to form the C-terminus of the beta chain, while the remainder of the serine residue undergoes an oxidative deamination to produce ammonia and the pyruvoyl prosthetic group on the alpha chain.

It is found in the cell membrane. It catalyses the reaction a 1,2-diacyl-sn-glycero-3-phospho-L-serine + H(+) = a 1,2-diacyl-sn-glycero-3-phosphoethanolamine + CO2. The protein operates within phospholipid metabolism; phosphatidylethanolamine biosynthesis; phosphatidylethanolamine from CDP-diacylglycerol: step 2/2. In terms of biological role, catalyzes the formation of phosphatidylethanolamine (PtdEtn) from phosphatidylserine (PtdSer). This Parvibaculum lavamentivorans (strain DS-1 / DSM 13023 / NCIMB 13966) protein is Phosphatidylserine decarboxylase proenzyme.